The primary structure comprises 340 residues: NADH-quinone oxidoreductase subunit H (340 aa).

A run of 9 helical transmembrane segments spans residues 3–23 (LVGM…LVYM), 69–89 (WAFF…WAVI), 102–122 (VVVM…VLAI), 127–147 (VYGI…LGAI), 154–174 (ISYE…AGSL), 186–206 (MPYW…VSML), 248–268 (ILVS…PLNI), 274–294 (IPGF…FIWV), and 312–332 (KVFL…LLWV).

This sequence belongs to the complex I subunit 1 family. In terms of assembly, NDH-1 is composed of 14 different subunits. Subunits NuoA, H, J, K, L, M, N constitute the membrane sector of the complex.

It is found in the cell inner membrane. The catalysed reaction is a quinone + NADH + 5 H(+)(in) = a quinol + NAD(+) + 4 H(+)(out). In terms of biological role, NDH-1 shuttles electrons from NADH, via FMN and iron-sulfur (Fe-S) centers, to quinones in the respiratory chain. The immediate electron acceptor for the enzyme in this species is believed to be ubiquinone. Couples the redox reaction to proton translocation (for every two electrons transferred, four hydrogen ions are translocated across the cytoplasmic membrane), and thus conserves the redox energy in a proton gradient. This subunit may bind ubiquinone. This chain is NADH-quinone oxidoreductase subunit H, found in Anaplasma phagocytophilum (strain HZ).